The primary structure comprises 213 residues: Ras-related protein Rab-25 (213 aa).

GTP contacts are provided by Ser-21, Gly-24, Lys-25, Thr-26, Asn-27, Ser-38, His-39, Thr-43, and Thr-44. Thr-26 serves as a coordination point for Mg(2+). Short sequence motifs (switch) lie at residues 35–49 and 67–84; these read NEFSHDSRTTIGVEF and DTAGLERYRAITSAYYRG. Positions 44 and 67 each coordinate Mg(2+). GTP contacts are provided by Gly-70, Asn-125, Lys-126, Asp-128, Ala-156, and Leu-157. 2 S-geranylgeranyl cysteine lipidation sites follow: Cys-209 and Cys-210. At Cys-210 the chain carries Cysteine methyl ester. A propeptide spans 211 to 213 (removed in mature form); sequence ISL.

The protein belongs to the small GTPase superfamily. Rab family. In terms of assembly, interacts (GTP-bound form) with RAB11FIP1, RAB11FIP2, RAB11FIP3 and RAB11FIP4. Interacts (via the hypervariable C-terminal region) with ITGB1 (via the cytoplasmic region); the interaction is GTP-dependent. Interacts with ITGAV. Associates with the integrin alpha-V/beta-1 heterodimer. Interacts with VPS33B. Requires Mg(2+) as cofactor.

It localises to the cell membrane. Its subcellular location is the cell projection. It is found in the pseudopodium membrane. The protein resides in the cytoplasmic vesicle. It catalyses the reaction GTP + H2O = GDP + phosphate + H(+). With respect to regulation, regulated by guanine nucleotide exchange factors (GEFs) which promote the exchange of bound GDP for free GTP. Regulated by GTPase activating proteins (GAPs) which increase the GTP hydrolysis activity. Inhibited by GDP dissociation inhibitors (GDIs) which prevent Rab-GDP dissociation. In terms of biological role, the small GTPases Rab are key regulators of intracellular membrane trafficking, from the formation of transport vesicles to their fusion with membranes. Rabs cycle between an inactive GDP-bound form and an active GTP-bound form that is able to recruit to membranes different set of downstream effectors directly responsible for vesicle formation, movement, tethering and fusion. RAB25 regulates epithelial cell differentiation, proliferation and survival, thereby playing key roles in tumorigenesis. Promotes invasive migration of cells in which it functions to localize and maintain integrin alpha-V/beta-1 at the tips of extending pseudopodia. Involved in the regulation of epithelial morphogenesis through the control of CLDN4 expression and localization at tight junctions. May selectively regulate the apical recycling pathway. Together with MYO5B regulates transcytosis. The protein is Ras-related protein Rab-25 (RAB25) of Canis lupus familiaris (Dog).